We begin with the raw amino-acid sequence, 419 residues long: Inositol-tetrakisphosphate 1-kinase (419 aa).

A 1D-myo-inositol 1,3,4-trisphosphate-binding site is contributed by Lys18. ATP contacts are provided by Arg106 and Lys157. An ATP-grasp domain is found at 117 to 334 (EAYMKDDRIC…TGGAATEEVA (218 aa)). Positions 167 and 199 each coordinate 1D-myo-inositol 1,3,4-trisphosphate. Residues 188-199 (QNFINHNAVLYK), Ser214, Ser232, and Ser236 contribute to the ATP site. 3 residues coordinate Mg(2+): Asp281, Asp295, and Asn297. Residue Asn297 coordinates 1D-myo-inositol 1,3,4-trisphosphate. The residue at position 388 (Lys388) is an N6-acetyllysine; by EP300 and CREBBP. At Ser401 the chain carries Phosphoserine. Lys415 bears the N6-acetyllysine; by EP300 and CREBBP mark.

It belongs to the ITPK1 family. As to quaternary structure, monomer. Interacts with GPS1/COPS1. The cofactor is Mg(2+). Post-translationally, acetylation by EP300 and CREBBP destabilizes ITPK1, and down-regulates enzymatic activity. Deacetylated by SIRT1.

It carries out the reaction 1D-myo-inositol 3,4,5,6-tetrakisphosphate + ATP = 1D-myo-inositol 1,3,4,5,6-pentakisphosphate + ADP + H(+). The enzyme catalyses 1D-myo-inositol 1,3,4-trisphosphate + ATP = 1D-myo-inositol 1,3,4,5-tetrakisphosphate + ADP + H(+). It catalyses the reaction 1D-myo-inositol 1,3,4-trisphosphate + ATP = 1D-myo-inositol 1,3,4,6-tetrakisphosphate + ADP + H(+). The catalysed reaction is 1D-myo-inositol 3,4,6-trisphosphate + ATP = 1D-myo-inositol 1,3,4,6-tetrakisphosphate + ADP + H(+). It carries out the reaction 1D-myo-inositol 1,3,4-trisphosphate + 1D-myo-inositol 1,3,4,5,6-pentakisphosphate = 1D-myo-inositol 3,4,5,6-tetrakisphosphate + 1D-myo-inositol 1,3,4,6-tetrakisphosphate. The enzyme catalyses 1D-myo-inositol 1,3,4-trisphosphate + 1D-myo-inositol 1,3,4,5,6-pentakisphosphate = 1D-myo-inositol 3,4,5,6-tetrakisphosphate + 1D-myo-inositol 1,3,4,5-tetrakisphosphate. Its function is as follows. Kinase that can phosphorylate various inositol polyphosphate such as Ins(3,4,5,6)P4 or Ins(1,3,4)P3. Phosphorylates Ins(3,4,5,6)P4 at position 1 to form Ins(1,3,4,5,6)P5. This reaction is thought to have regulatory importance, since Ins(3,4,5,6)P4 is an inhibitor of plasma membrane Ca(2+)-activated Cl(-) channels, while Ins(1,3,4,5,6)P5 is not. Also phosphorylates Ins(1,3,4)P3 on O-5 and O-6 to form Ins(1,3,4,6)P4, an essential molecule in the hexakisphosphate (InsP6) pathway. Also acts as an inositol polyphosphate phosphatase that dephosphorylates Ins(1,3,4,5)P4 and Ins(1,3,4,6)P4 to Ins(1,3,4)P3, and Ins(1,3,4,5,6)P5 to Ins(3,4,5,6)P4. May also act as an isomerase that interconverts the inositol tetrakisphosphate isomers Ins(1,3,4,5)P4 and Ins(1,3,4,6)P4 in the presence of ADP and magnesium. Probably acts as the rate-limiting enzyme of the InsP6 pathway. Modifies TNF-alpha-induced apoptosis by interfering with the activation of TNFRSF1A-associated death domain. Plays an important role in MLKL-mediated necroptosis. Produces highly phosphorylated inositol phosphates such as inositolhexakisphosphate (InsP6) which bind to MLKL mediating the release of an N-terminal auto-inhibitory region leading to its activation. Essential for activated phospho-MLKL to oligomerize and localize to the cell membrane during necroptosis. This is Inositol-tetrakisphosphate 1-kinase from Mus musculus (Mouse).